The chain runs to 229 residues: Peptidase E (229 aa).

Residues Ser120, Asp135, and His157 each act as charge relay system in the active site.

The protein belongs to the peptidase S51 family.

It is found in the cytoplasm. The catalysed reaction is Dipeptidase E catalyzes the hydrolysis of dipeptides Asp-|-Xaa. It does not act on peptides with N-terminal Glu, Asn or Gln, nor does it cleave isoaspartyl peptides.. In terms of biological role, hydrolyzes dipeptides containing N-terminal aspartate residues. May play a role in allowing the cell to use peptide aspartate to spare carbon otherwise required for the synthesis of the aspartate family of amino acids. The chain is Peptidase E from Salmonella schwarzengrund (strain CVM19633).